The chain runs to 543 residues: CTP synthase (543 aa).

Residues 1-265 form an amidoligase domain region; it reads MTRYIFVTGG…DDFVVERFGL (265 aa). Serine 13 is a CTP binding site. Residue serine 13 coordinates UTP. Residues 14-19 and aspartate 71 contribute to the ATP site; that span reads SLGKGI. The Mg(2+) site is built by aspartate 71 and glutamate 139. Residues 146 to 148, 186 to 191, and lysine 222 each bind CTP; these read DIE and KTKPTQ. UTP is bound by residues 186-191 and lysine 222; that span reads KTKPTQ. A Glutamine amidotransferase type-1 domain is found at 290 to 541; that stretch reads TIAMVGKYME…VKAALAQHQK (252 aa). Residue glycine 351 participates in L-glutamine binding. Cysteine 378 acts as the Nucleophile; for glutamine hydrolysis in catalysis. L-glutamine-binding positions include 379–382, glutamate 402, and arginine 469; that span reads LGMQ. Residues histidine 514 and glutamate 516 contribute to the active site.

It belongs to the CTP synthase family. In terms of assembly, homotetramer.

It catalyses the reaction UTP + L-glutamine + ATP + H2O = CTP + L-glutamate + ADP + phosphate + 2 H(+). The catalysed reaction is L-glutamine + H2O = L-glutamate + NH4(+). It carries out the reaction UTP + NH4(+) + ATP = CTP + ADP + phosphate + 2 H(+). It functions in the pathway pyrimidine metabolism; CTP biosynthesis via de novo pathway; CTP from UDP: step 2/2. Its activity is regulated as follows. Allosterically activated by GTP, when glutamine is the substrate; GTP has no effect on the reaction when ammonia is the substrate. The allosteric effector GTP functions by stabilizing the protein conformation that binds the tetrahedral intermediate(s) formed during glutamine hydrolysis. Inhibited by the product CTP, via allosteric rather than competitive inhibition. In terms of biological role, catalyzes the ATP-dependent amination of UTP to CTP with either L-glutamine or ammonia as the source of nitrogen. Regulates intracellular CTP levels through interactions with the four ribonucleotide triphosphates. The chain is CTP synthase from Pseudomonas fluorescens (strain Pf0-1).